The following is a 455-amino-acid chain: Ectonucleoside triphosphate diphosphohydrolase 6 (455 aa).

Residues 1–12 are Cytoplasmic-facing; the sequence is MRKIPNHGTLRM. Residues 13–32 form a helical; Signal-anchor for type II membrane protein membrane-spanning segment; the sequence is TKVAYPLGLCVGLFIYVAYI. Residues 33 to 455 are Lumenal-facing; it reads KWHRASAAQA…SLKRQKVPAL (423 aa). N-linked (GlcNAc...) asparagine glycosylation occurs at asparagine 192. Glutamate 196 serves as the catalytic Proton acceptor. Asparagine 256 is a glycosylation site (N-linked (GlcNAc...) asparagine). Disulfide bonds link cysteine 297/cysteine 327 and cysteine 387/cysteine 401.

Belongs to the GDA1/CD39 NTPase family. It depends on Ca(2+) as a cofactor. Mg(2+) serves as cofactor. Post-translationally, might be cleaved at the N-terminus, retained in an intracellular membrane compartment and in addition be released into the extracellular medium. N-glycosylated. Expressed in heart and brain.

It is found in the golgi apparatus membrane. The protein resides in the secreted. Its subcellular location is the cell membrane. The enzyme catalyses a ribonucleoside 5'-diphosphate + H2O = a ribonucleoside 5'-phosphate + phosphate + H(+). The catalysed reaction is IDP + H2O = IMP + phosphate + H(+). It catalyses the reaction GDP + H2O = GMP + phosphate + H(+). It carries out the reaction UDP + H2O = UMP + phosphate + H(+). In terms of biological role, catalyzes the hydrolysis of nucleoside triphosphates and diphosphates in a calcium- or magnesium-dependent manner. Has a strong preference for nucleoside diphosphates, preferentially hydrolyzes GDP, IDP, and UDP, with slower hydrolysis of CDP, ITP, GTP, CTP, ADP, and UTP and virtually no hydrolysis of ATP. The membrane bound form might support glycosylation reactions in the Golgi apparatus and, when released from cells, might catalyze the hydrolysis of extracellular nucleotides. This is Ectonucleoside triphosphate diphosphohydrolase 6 (Entpd6) from Rattus norvegicus (Rat).